The following is a 369-amino-acid chain: Ubiquitin-conjugating enzyme E2 Q2 (369 aa).

A disordered region spans residues 117-143 (DQPLPTGQNGTTEEVTSEEEEEEEMAE). Acidic residues predominate over residues 131 to 143 (VTSEEEEEEEMAE). The UBC core domain occupies 198–362 (QASDRLMKEL…VQIHEKNGWY (165 aa)). C298 functions as the Glycyl thioester intermediate in the catalytic mechanism.

This sequence belongs to the ubiquitin-conjugating enzyme family. Auto-ubiquitinated in vitro. In terms of tissue distribution, detected at embryo implantation sites in the luminal epithelium of pregnant endometrium. Detected at low levels in ovary and liver.

It is found in the cytoplasm. It catalyses the reaction S-ubiquitinyl-[E1 ubiquitin-activating enzyme]-L-cysteine + [E2 ubiquitin-conjugating enzyme]-L-cysteine = [E1 ubiquitin-activating enzyme]-L-cysteine + S-ubiquitinyl-[E2 ubiquitin-conjugating enzyme]-L-cysteine.. The protein operates within protein modification; protein ubiquitination. Functionally, accepts ubiquitin from the E1 complex and catalyzes its covalent attachment to other proteins. In vitro catalyzes 'Lys-48'-linked polyubiquitination. This chain is Ubiquitin-conjugating enzyme E2 Q2 (UBE2Q2), found in Oryctolagus cuniculus (Rabbit).